Consider the following 274-residue polypeptide: Large ribosomal subunit protein uL2cz/uL2cy (274 aa).

2 disordered regions span residues 1 to 25 (MAIHLYKTSTPSTRNGAVDSQVKSN) and 224 to 274 (NPVD…RRSK).

It belongs to the universal ribosomal protein uL2 family. As to quaternary structure, part of the 50S ribosomal subunit.

The protein localises to the plastid. The protein resides in the chloroplast. The polypeptide is Large ribosomal subunit protein uL2cz/uL2cy (rpl2-A) (Cucumis sativus (Cucumber)).